Reading from the N-terminus, the 712-residue chain is DNA ligase (712 aa).

A compositionally biased stretch (low complexity) spans M1–A22. The segment at M1–L23 is disordered. NAD(+) is bound at residue D53–D57. The tract at residues S69 to F93 is disordered. NAD(+) is bound by residues S104 to L105 and E129. K131 (N6-AMP-lysine intermediate) is an active-site residue. Positions 152, 192, 308, and 332 each coordinate NAD(+). Residues C426, C429, C445, and C451 each contribute to the Zn(2+) site. The BRCT domain maps to I624–D712.

This sequence belongs to the NAD-dependent DNA ligase family. LigA subfamily. It depends on Mg(2+) as a cofactor. Requires Mn(2+) as cofactor.

It carries out the reaction NAD(+) + (deoxyribonucleotide)n-3'-hydroxyl + 5'-phospho-(deoxyribonucleotide)m = (deoxyribonucleotide)n+m + AMP + beta-nicotinamide D-nucleotide.. Its function is as follows. DNA ligase that catalyzes the formation of phosphodiester linkages between 5'-phosphoryl and 3'-hydroxyl groups in double-stranded DNA using NAD as a coenzyme and as the energy source for the reaction. It is essential for DNA replication and repair of damaged DNA. The chain is DNA ligase from Corynebacterium urealyticum (strain ATCC 43042 / DSM 7109).